Here is a 60-residue protein sequence, read N- to C-terminus: UPF0434 protein Daci_3569 (60 aa).

This sequence belongs to the UPF0434 family.

This Delftia acidovorans (strain DSM 14801 / SPH-1) protein is UPF0434 protein Daci_3569.